Here is a 1081-residue protein sequence, read N- to C-terminus: uncharacterized protein (1081 aa).

Coiled-coil stretches lie at residues 18–131 and 173–242; these read AIEE…FEEN and NHDE…NDDK. The span at 22–53 shows a compositional bias: basic and acidic residues; sequence NNKNREIQEKRQKETKDRNDRMVQNQKDRKEM. Residues 22–60 are disordered; that stretch reads NNKNREIQEKRQKETKDRNDRMVQNQKDRKEMIGLTNEK. Disordered stretches follow at residues 250-321 and 388-1081; these read TDDE…KPGI and QEPK…GNDE. Over residues 267–283 the composition is skewed to pro residues; it reads TPTPTPTPTPTPTPTPT. 2 stretches are compositionally biased toward low complexity: residues 284–313 and 396–410; these read PTTT…KTST and NNQS…QAGD. Residues 411 to 421 show a composition bias toward basic and acidic residues; that stretch reads DQNKNQNRDEN. Composition is skewed to low complexity over residues 422 to 568, 576 to 602, 614 to 623, 633 to 644, 662 to 672, and 680 to 733; these read NQGG…NNQE, NQDG…GGEN, GENNQDGGEN, DGENNQDGGENN, GENNQDGGENN, and QDGG…NNQD. 3 stretches are compositionally biased toward acidic residues: residues 748-768, 778-832, and 840-854; these read GGED…DNQD, NNQD…DENN, and QDGD…DENN. Composition is skewed to low complexity over residues 855-869 and 877-888; these read NQDG…GENN and NQDGGENNQDGE. Positions 889–954 are enriched in acidic residues; sequence NNQDGDENNN…GDENNQDGDE (66 aa). Low complexity-rich tracts occupy residues 955–975, 983–1026, and 1034–1081; these read NNQG…GGDE, ENNQ…GGDE, and GENN…GNDE.

This is an uncharacterized protein from Dictyostelium discoideum (Social amoeba).